The following is a 704-amino-acid chain: Eukaryotic translation initiation factor 2-alpha kinase 1 (704 aa).

The 444-residue stretch at 224-667 folds into the Protein kinase domain; that stretch reads FEELELLGKG…LTSNLFHDLV (444 aa). ATP is bound by residues 230 to 238 and Lys253; that span reads LGKGGYGSV. Residue Asp491 is the Proton acceptor of the active site.

The protein belongs to the protein kinase superfamily. Ser/Thr protein kinase family. GCN2 subfamily. Autophosphorylated.

It carries out the reaction L-seryl-[protein] + ATP = O-phospho-L-seryl-[protein] + ADP + H(+). It catalyses the reaction L-threonyl-[protein] + ATP = O-phospho-L-threonyl-[protein] + ADP + H(+). In terms of biological role, mediates down-regulation of protein synthesis in response to stress conditions by the phosphorylation of the alpha subunit of eIF-2 (tif211) on 'Ser-52'. Protein synthesis is inhibited at the level of initiation. Activity is inhibited in the presence of heme. The sequence is that of Eukaryotic translation initiation factor 2-alpha kinase 1 (hri1) from Schizosaccharomyces pombe (strain 972 / ATCC 24843) (Fission yeast).